Consider the following 96-residue polypeptide: DNA-directed RNA polymerase subunit Rpo11 (96 aa).

This sequence belongs to the archaeal Rpo11/eukaryotic RPB11/RPC19 RNA polymerase subunit family. As to quaternary structure, part of the RNA polymerase complex.

Its subcellular location is the cytoplasm. The enzyme catalyses RNA(n) + a ribonucleoside 5'-triphosphate = RNA(n+1) + diphosphate. Its function is as follows. DNA-dependent RNA polymerase (RNAP) catalyzes the transcription of DNA into RNA using the four ribonucleoside triphosphates as substrates. In Methanococcus maripaludis (strain DSM 14266 / JCM 13030 / NBRC 101832 / S2 / LL), this protein is DNA-directed RNA polymerase subunit Rpo11.